The chain runs to 477 residues: Glycogen synthase (477 aa).

An ADP-alpha-D-glucose-binding site is contributed by K15.

Belongs to the glycosyltransferase 1 family. Bacterial/plant glycogen synthase subfamily.

It carries out the reaction [(1-&gt;4)-alpha-D-glucosyl](n) + ADP-alpha-D-glucose = [(1-&gt;4)-alpha-D-glucosyl](n+1) + ADP + H(+). It participates in glycan biosynthesis; glycogen biosynthesis. In terms of biological role, synthesizes alpha-1,4-glucan chains using ADP-glucose. In Streptococcus pneumoniae serotype 19F (strain G54), this protein is Glycogen synthase.